Consider the following 261-residue polypeptide: Calbindin (261 aa).

At alanine 2 the chain carries N-acetylalanine. An interaction with RANBP9 region spans residues 2–7 (AESHLQ). 5 consecutive EF-hand domains span residues 11-46 (ITAS…LQQA), 53-88 (ELSP…EENF), 98-133 (KSCE…LLEK), 142-177 (KLAE…QENF), and 186-221 (MCGK…LCEK). Ca(2+)-binding residues include aspartate 24, aspartate 26, serine 28, tyrosine 30, and glutamate 35. 14 residues coordinate Ca(2+): aspartate 111, aspartate 113, serine 115, glutamate 122, aspartate 155, asparagine 157, aspartate 159, lysine 161, glutamate 166, aspartate 199, aspartate 201, asparagine 203, tyrosine 205, and glutamate 210.

It belongs to the calbindin family. Interacts with RANBP9.

In terms of biological role, buffers cytosolic calcium. May stimulate a membrane Ca(2+)-ATPase and a 3',5'-cyclic nucleotide phosphodiesterase. This chain is Calbindin (CALB1), found in Homo sapiens (Human).